A 65-amino-acid polypeptide reads, in one-letter code: Large ribosomal subunit protein bL35 (65 aa).

Belongs to the bacterial ribosomal protein bL35 family.

The chain is Large ribosomal subunit protein bL35 from Desulforapulum autotrophicum (strain ATCC 43914 / DSM 3382 / VKM B-1955 / HRM2) (Desulfobacterium autotrophicum).